A 351-amino-acid polypeptide reads, in one-letter code: Methylthioribose-1-phosphate isomerase (351 aa).

Residues 51 to 53 (RGA), arginine 94, and glutamine 199 contribute to the substrate site. Residue aspartate 240 is the Proton donor of the active site. 250–251 (NK) is a substrate binding site.

Belongs to the EIF-2B alpha/beta/delta subunits family. MtnA subfamily. As to quaternary structure, homodimer.

It catalyses the reaction 5-(methylsulfanyl)-alpha-D-ribose 1-phosphate = 5-(methylsulfanyl)-D-ribulose 1-phosphate. Its pathway is amino-acid biosynthesis; L-methionine biosynthesis via salvage pathway; L-methionine from S-methyl-5-thio-alpha-D-ribose 1-phosphate: step 1/6. Catalyzes the interconversion of methylthioribose-1-phosphate (MTR-1-P) into methylthioribulose-1-phosphate (MTRu-1-P). The polypeptide is Methylthioribose-1-phosphate isomerase (Bacillus thuringiensis (strain Al Hakam)).